The following is a 203-amino-acid chain: Ras-related protein RABD2a (203 aa).

GTP-binding positions include 15 to 23 (GDSGVGKSC), 33 to 40 (YVESYIST), 63 to 67 (DTAGQ), 121 to 124 (NKSD), and 151 to 153 (SAK). Positions 37–45 (YISTIGVDF) match the Effector region motif. The interval 176-203 (QPAGNNARPPTVQIRGQPVAQKNGCCST) is disordered. Residues C200 and C201 are each lipidated (S-geranylgeranyl cysteine).

It belongs to the small GTPase superfamily. Rab family. As to quaternary structure, does not interact with GC5.

The protein resides in the golgi apparatus. It is found in the trans-Golgi network membrane. Its subcellular location is the golgi apparatus membrane. Its function is as follows. Protein transport. Regulator of membrane traffic from the Golgi apparatus towards the endoplasmic reticulum (ER). The protein is Ras-related protein RABD2a (RABD2A) of Arabidopsis thaliana (Mouse-ear cress).